The primary structure comprises 1440 residues: MGKTYSSPVNPIPKAPKGLAIHHWLNFLQAAYRLQPGPSEFDFHQLRKFLKLAIKTPVWLNPINYSVLARLIPKNYPGRVHEIVAILIQETPAREAPPSAPPADDPQKPPPYPEHAQVEPQCLPVLHPHGAPATHRPWQMKDLQAIKQEVSSSAPGSPQFMQTVRLAVQQFDPTAKDLHDLLQYLCSSLVASLHHQQLETLIAQAETQGITGYNPLAGPLRVQANNPNQQGLRREYQNLWLSAFSALPGNTKDPTWAAILQGPEEPFCSFVERLNVALDNGLPEGTPKDPILRSLAYSNANKECQKLLQARGQTNSPLGEMLRACQTWTPRDKNKILMIQPKKTPPPNQPCFRCGQAGHWSRDCKQPRPPPGPCPLCQDPAHWKQDCPQLKADTKGSEDLLLDLPCEASHVRERKNLLRGGGLTSPRTILPLIPLSQQRQPILHVQVSFSNTSPVGVQALLDTGADITVLPAYLCPPDSNLQDTTVLGAGGPSTSKFKILPRPVHIHLPFRKQPVTLTSCLIDTNDQWTILGRDALQQCQSSLYLADQPSSVLPVQTPKLIGLEHLPPPPEVSQFPLNPERLQALTDLVSRALEAKHIEPYQGPGNNPIFPVKKPNGKWRFIHDLRATNSLTRDLASPSPGPPDLTSLPQDLPHLRTIDLTDAFFQIPLPAVFQPYFAFTLPQPNNHGPGTRYSWRVLPQGFKNSPTLFEQQLSHILAPVRKAFPNSLIIQYMDDILLASPALRELTALTDKVTNALTKEGLPMSLEKTQATPGSIHFLGQVISPDCITYETLPSIHVKSIWSLAELQSMLGELQWVSKGTPVLRSSLHQLYLALRGHRDPRDTIELTSTQVQALKTIQKALALNCRSRLVSQLPILALIILRPTGTTAVLFQTKQKWPLVWLHTPHPATSLRPWGQLLANAIITLDKYSLQHYGQICKSFHHNISNQALTYYLHTSDQSSVAILLQHSHRFHNLGAQPSGPWRSLLQVPQIFQNIDVLRPPFIISPVVIDHAPCLFSDGATSKAAFILWDKQVIHQQVLPLPSTCSAQAGELFGLLAGLQKSKPWPALNIFLDSKFLIGHLRRMALGAFLGPSTQCDLHARLFPLLQGKTVYVHHVRSHTLLQDPISRLNEATDALMLAPLLPLNPTTLHQITHCNPHALRNHGATASEAHAIVQACHTCKVINPQGRLPQGYIRRGHAPNVIWQGDVTHLHYKRYKYCLLVWVDTYSGVVSVSCRRKETGSDCVVSLLAAISILGKPHSINTDNGTAYLSQEFQQFCSSLSIKHSTHVPYNPTSSGLVERTNGILKTLISKYLLDNHHLPLETAISKSLWTINHLNVLPSCQKTRWQLHQAQPLPSIPENTLPPRASPKWYYYKIPGLTNPRWSGPVQSLKEAAGAALIPVGGSHLWIPWRLLKRGICPRPESNAVADPETKDHQLHG.

A lipid anchor (N-myristoyl glycine; by host) is attached at Gly-2. The tract at residues 93-117 (AREAPPSAPPADDPQKPPPYPEHAQ) is disordered. Positions 98-101 (PSAP) match the PTAP/PSAP motif motif. Pro residues predominate over residues 98 to 113 (PSAPPADDPQKPPPYP). The short motif at 109 to 112 (PPPY) is the PPXY motif element. CCHC-type zinc fingers lie at residues 349–366 (QPCFRCGQAGHWSRDCKQ) and 372–389 (GPCPLCQDPAHWKQDCPQ). Positions 457–535 (VQALLDTGAD…DQWTILGRDA (79 aa)) constitute a Peptidase A2 domain. Asp-462 serves as the catalytic For protease activity; shared with dimeric partner. A Reverse transcriptase domain is found at 593–783 (LEAKHIEPYQ…GSIHFLGQVI (191 aa)). Positions 659, 734, 735, 1019, 1052, 1074, 1135, 1208, and 1265 each coordinate Mg(2+). Residues 1010-1143 (IDHAPCLFSD…TDALMLAPLL (134 aa)) form the RNase H type-1 domain. Residues 1197 to 1366 (RGHAPNVIWQ…PSIPENTLPP (170 aa)) form the Integrase catalytic domain. Residues 1371–1420 (KWYYYKIPGLTNPRWSGPVQSLKEAAGAALIPVGGSHLWIPWRLLKRGIC) constitute a DNA-binding region (integrase-type).

As to quaternary structure, interacts with human TSG101. This interaction is essential for budding and release of viral particles. Mg(2+) serves as cofactor. In terms of processing, specific enzymatic cleavages by the viral protease yield mature proteins. The polyprotein is cleaved during and after budding, this process is termed maturation. The protease is autoproteolytically processed at its N- and C-termini.

The protein localises to the virion. The enzyme catalyses Endonucleolytic cleavage to 5'-phosphomonoester.. It carries out the reaction DNA(n) + a 2'-deoxyribonucleoside 5'-triphosphate = DNA(n+1) + diphosphate. Functionally, matrix protein p19 targets Gag, Gag-Pro and Gag-Pro-Pol polyproteins to the plasma membrane via a multipartite membrane binding signal, that includes its myristoylated N-terminus. Also mediates nuclear localization of the preintegration complex. Its function is as follows. Capsid protein p24 forms the conical core of the virus that encapsulates the genomic RNA-nucleocapsid complex. Nucleocapsid protein p15 is involved in the packaging and encapsidation of two copies of the genome. In terms of biological role, the aspartyl protease mediates proteolytic cleavages of Gag, Gag-Pro and Gag-Pro-Pol polyproteins during or shortly after the release of the virion from the plasma membrane. Cleavages take place as an ordered, step-wise cascade to yield mature proteins. This process is called maturation. Displays maximal activity during the budding process just prior to particle release from the cell. Hydrolyzes host EIF4GI in order to shut off the capped cellular mRNA translation. The resulting inhibition of cellular protein synthesis serves to ensure maximal viral gene expression and to evade host immune response. Functionally, reverse transcriptase (RT) is a multifunctional enzyme that converts the viral RNA genome into dsDNA in the cytoplasm, shortly after virus entry into the cell. This enzyme displays a DNA polymerase activity that can copy either DNA or RNA templates, and a ribonuclease H (RNase H) activity that cleaves the RNA strand of RNA-DNA heteroduplexes in a partially processive 3' to 5'-endonucleasic mode. Conversion of viral genomic RNA into dsDNA requires many steps. A tRNA-Pro binds to the primer-binding site (PBS) situated at the 5'-end of the viral RNA. RT uses the 3' end of the tRNA primer to perform a short round of RNA-dependent minus-strand DNA synthesis. The reading proceeds through the U5 region and ends after the repeated (R) region which is present at both ends of viral RNA. The portion of the RNA-DNA heteroduplex is digested by the RNase H, resulting in a ssDNA product attached to the tRNA primer. This ssDNA/tRNA hybridizes with the identical R region situated at the 3' end of viral RNA. This template exchange, known as minus-strand DNA strong stop transfer, can be either intra- or intermolecular. RT uses the 3' end of this newly synthesized short ssDNA to perform the RNA-dependent minus-strand DNA synthesis of the whole template. RNase H digests the RNA template except for a polypurine tract (PPT) situated at the 5' end of the genome. It is not clear if both polymerase and RNase H activities are simultaneous. RNase H probably can proceed both in a polymerase-dependent (RNA cut into small fragments by the same RT performing DNA synthesis) and a polymerase-independent mode (cleavage of remaining RNA fragments by free RTs). Secondly, RT performs DNA-directed plus-strand DNA synthesis using the PPT that has not been removed by RNase H as primer. PPT and tRNA primers are then removed by RNase H. The 3' and 5' ssDNA PBS regions hybridize to form a circular dsDNA intermediate. Strand displacement synthesis by RT to the PBS and PPT ends produces a blunt ended, linear dsDNA copy of the viral genome that includes long terminal repeats (LTRs) at both ends. Its function is as follows. Integrase catalyzes viral DNA integration into the host chromosome, by performing a series of DNA cutting and joining reactions. This enzyme activity takes place after virion entry into a cell and reverse transcription of the RNA genome in dsDNA. The first step in the integration process is 3' processing. This step requires a complex comprising the viral genome, matrix protein, and integrase. This complex is called the pre-integration complex (PIC). The integrase protein removes 2 nucleotides from each 3' end of the viral DNA, leaving recessed dinucleotides OH's at the 3' ends. In the second step, the PIC access cell chromosomes during cell division. The third step, termed strand transfer, the integrase protein joins the previously processed 3' ends to the 5'-ends of strands of target cellular DNA at the site of integration. The 5'-ends are produced by integrase-catalyzed staggered cuts, 5 bp apart. A Y-shaped, gapped, recombination intermediate results, with the 5'-ends of the viral DNA strands and the 3' ends of target DNA strands remaining unjoined, flanking a gap of 5 bp. The last step is viral DNA integration into host chromosome. This involves host DNA repair synthesis in which the 5 bp gaps between the unjoined strands (see above) are filled in and then ligated. The sequence is that of Gag-Pro-Pol polyprotein (gag-pro-pol) from Human T-cell leukemia virus 3 (strain Pyl43) (HTLV-3).